Consider the following 213-residue polypeptide: Kynurenine formamidase (213 aa).

Position 20 (W20) interacts with substrate. H50, H54, and D56 together coordinate Zn(2+). The active-site Proton donor/acceptor is H60. H161 and E173 together coordinate Zn(2+).

It belongs to the Cyclase 1 superfamily. KynB family. In terms of assembly, homodimer. Requires Zn(2+) as cofactor.

The catalysed reaction is N-formyl-L-kynurenine + H2O = L-kynurenine + formate + H(+). It participates in amino-acid degradation; L-tryptophan degradation via kynurenine pathway; L-kynurenine from L-tryptophan: step 2/2. In terms of biological role, catalyzes the hydrolysis of N-formyl-L-kynurenine to L-kynurenine, the second step in the kynurenine pathway of tryptophan degradation. This Pseudomonas aeruginosa (strain ATCC 15692 / DSM 22644 / CIP 104116 / JCM 14847 / LMG 12228 / 1C / PRS 101 / PAO1) protein is Kynurenine formamidase.